We begin with the raw amino-acid sequence, 369 residues long: Uroporphyrinogen decarboxylase (369 aa).

Substrate is bound by residues 36–40, D86, Y162, S217, and H342; that span reads RQAGR.

The protein belongs to the uroporphyrinogen decarboxylase family. As to quaternary structure, homodimer.

It is found in the cytoplasm. The catalysed reaction is uroporphyrinogen III + 4 H(+) = coproporphyrinogen III + 4 CO2. It functions in the pathway porphyrin-containing compound metabolism; protoporphyrin-IX biosynthesis; coproporphyrinogen-III from 5-aminolevulinate: step 4/4. Functionally, catalyzes the decarboxylation of four acetate groups of uroporphyrinogen-III to yield coproporphyrinogen-III. The polypeptide is Uroporphyrinogen decarboxylase (Albidiferax ferrireducens (strain ATCC BAA-621 / DSM 15236 / T118) (Rhodoferax ferrireducens)).